Consider the following 283-residue polypeptide: Bifunctional protein FolD (283 aa).

NADP(+) is bound by residues 165-167 (GRS), S190, and V231.

The protein belongs to the tetrahydrofolate dehydrogenase/cyclohydrolase family. As to quaternary structure, homodimer.

The catalysed reaction is (6R)-5,10-methylene-5,6,7,8-tetrahydrofolate + NADP(+) = (6R)-5,10-methenyltetrahydrofolate + NADPH. The enzyme catalyses (6R)-5,10-methenyltetrahydrofolate + H2O = (6R)-10-formyltetrahydrofolate + H(+). The protein operates within one-carbon metabolism; tetrahydrofolate interconversion. Catalyzes the oxidation of 5,10-methylenetetrahydrofolate to 5,10-methenyltetrahydrofolate and then the hydrolysis of 5,10-methenyltetrahydrofolate to 10-formyltetrahydrofolate. This Bacillus velezensis (strain DSM 23117 / BGSC 10A6 / LMG 26770 / FZB42) (Bacillus amyloliquefaciens subsp. plantarum) protein is Bifunctional protein FolD.